We begin with the raw amino-acid sequence, 378 residues long: Acetylornithine deacetylase (378 aa).

His76 is a binding site for Zn(2+). Asp78 is an active-site residue. Asp108 provides a ligand contact to Zn(2+). Residue Glu140 is part of the active site. Zn(2+)-binding residues include Glu141, Glu165, and His351.

The protein belongs to the peptidase M20A family. ArgE subfamily. As to quaternary structure, homodimer. Requires Zn(2+) as cofactor. It depends on Co(2+) as a cofactor. Glutathione is required as a cofactor.

The protein localises to the cytoplasm. It carries out the reaction N(2)-acetyl-L-ornithine + H2O = L-ornithine + acetate. The protein operates within amino-acid biosynthesis; L-arginine biosynthesis; L-ornithine from N(2)-acetyl-L-ornithine (linear): step 1/1. Its function is as follows. Catalyzes the hydrolysis of the amide bond of N(2)-acetylated L-amino acids. Cleaves the acetyl group from N-acetyl-L-ornithine to form L-ornithine, an intermediate in L-arginine biosynthesis pathway, and a branchpoint in the synthesis of polyamines. This chain is Acetylornithine deacetylase, found in Aliivibrio salmonicida (strain LFI1238) (Vibrio salmonicida (strain LFI1238)).